The following is a 267-amino-acid chain: Adenosine 5'-phosphosulfate reductase (267 aa).

Positions 1 to 29 (MPPFATIPATERNSAAQHQDPSPMSQPFD) are disordered. Over residues 11–25 (ERNSAAQHQDPSPMS) the composition is skewed to polar residues. Residues cysteine 139, cysteine 140, cysteine 228, and cysteine 231 each contribute to the [4Fe-4S] cluster site. Cysteine 256 acts as the Nucleophile; cysteine thiosulfonate intermediate in catalysis.

This sequence belongs to the PAPS reductase family. CysH subfamily. [4Fe-4S] cluster serves as cofactor.

Its subcellular location is the cytoplasm. It carries out the reaction [thioredoxin]-disulfide + sulfite + AMP + 2 H(+) = adenosine 5'-phosphosulfate + [thioredoxin]-dithiol. Its pathway is sulfur metabolism; hydrogen sulfide biosynthesis; sulfite from sulfate. Functionally, catalyzes the formation of sulfite from adenosine 5'-phosphosulfate (APS) using thioredoxin as an electron donor. This chain is Adenosine 5'-phosphosulfate reductase, found in Pseudomonas aeruginosa (strain LESB58).